Consider the following 377-residue polypeptide: Terpene synthase 1 (377 aa).

A DDxx(x)D/E motif motif is present at residues 81 to 86; it reads DDALDA. Residues 221–229 carry the NDxxSxxxD/E motif motif; that stretch reads NDLVSYEKE. The segment at 326–359 is disordered; the sequence is RKQSSSPNLTNSISIPTNNTNNSNNITSSPNKKQ. Residues 335 to 356 are compositionally biased toward low complexity; that stretch reads TNSISIPTNNTNNSNNITSSPN.

This sequence belongs to the terpene synthase family.

The enzyme catalyses (2E,6E)-farnesyl diphosphate = (2S,3R,6S,9S)-(-)-protoillud-7-ene + diphosphate. In terms of biological role, terpene synthase that converts its substrate farnesyl diphosphate (FPP) into the sesquiterpene protoillud-7-ene. This Dictyostelium purpureum (Slime mold) protein is Terpene synthase 1.